A 204-amino-acid polypeptide reads, in one-letter code: Guanylate kinase (204 aa).

The region spanning 4–182 (GMLVVVSGPS…AVNDLEAVLT (179 aa)) is the Guanylate kinase-like domain. 11 to 18 (GPSGAGKG) is a binding site for ATP.

It belongs to the guanylate kinase family.

The protein resides in the cytoplasm. The enzyme catalyses GMP + ATP = GDP + ADP. In terms of biological role, essential for recycling GMP and indirectly, cGMP. The chain is Guanylate kinase from Carboxydothermus hydrogenoformans (strain ATCC BAA-161 / DSM 6008 / Z-2901).